The following is a 273-amino-acid chain: NAD-dependent protein deacylase (273 aa).

The Deacetylase sirtuin-type domain maps to 20 to 272; the sequence is RERLRQRIFF…PEFVEKLLKG (253 aa). Residue 48-67 coordinates NAD(+); it reads GAGISAESGIRTFRAADGLW. The substrate site is built by Y92 and R95. 129 to 132 is a binding site for NAD(+); that stretch reads QNID. The active-site Proton acceptor is H147. Residues C155 and C174 each contribute to the Zn(2+) site. Residues 214 to 216, 240 to 242, and A258 contribute to the NAD(+) site; these read GTS and NLE.

This sequence belongs to the sirtuin family. Class III subfamily. Zn(2+) serves as cofactor.

It localises to the cytoplasm. The enzyme catalyses N(6)-acetyl-L-lysyl-[protein] + NAD(+) + H2O = 2''-O-acetyl-ADP-D-ribose + nicotinamide + L-lysyl-[protein]. It catalyses the reaction N(6)-succinyl-L-lysyl-[protein] + NAD(+) + H2O = 2''-O-succinyl-ADP-D-ribose + nicotinamide + L-lysyl-[protein]. It carries out the reaction N(6)-(2-hydroxyisobutanoyl)-L-lysyl-[protein] + NAD(+) + H2O = 2''-O-(2-hydroxyisobutanoyl)-ADP-D-ribose + nicotinamide + L-lysyl-[protein]. In terms of biological role, NAD-dependent lysine deacetylase that specifically removes acetyl groups on target proteins. Also acts as a protein-lysine deacylase by mediating protein desuccinylation and de-2-hydroxyisobutyrylation. Modulates the activities of several proteins which are inactive in their acylated form. In Escherichia coli O157:H7, this protein is NAD-dependent protein deacylase.